An 800-amino-acid polypeptide reads, in one-letter code: DNA topoisomerase 4 subunit A (800 aa).

The 465-residue stretch at 31-495 folds into the Topo IIA-type catalytic domain; it reads LPDVRDGLKP…EIEEIKIDKE (465 aa). Tyrosine 119 serves as the catalytic O-(5'-phospho-DNA)-tyrosine intermediate.

Belongs to the type II topoisomerase GyrA/ParC subunit family. ParC type 2 subfamily. As to quaternary structure, heterotetramer composed of ParC and ParE.

Its subcellular location is the cell membrane. The catalysed reaction is ATP-dependent breakage, passage and rejoining of double-stranded DNA.. Functionally, topoisomerase IV is essential for chromosome segregation. It relaxes supercoiled DNA. Performs the decatenation events required during the replication of a circular DNA molecule. This chain is DNA topoisomerase 4 subunit A, found in Staphylococcus aureus.